A 29-amino-acid chain; its full sequence is Galanin (29 aa).

Residue Thr-29 is modified to Threonine amide.

This sequence belongs to the galanin family.

The protein localises to the secreted. Contracts smooth muscle of the gastrointestinal and genitourinary tract, regulates growth hormone release, modulates insulin release, and may be involved in the control of adrenal secretion. The polypeptide is Galanin (GAL) (Gallus gallus (Chicken)).